The following is a 260-amino-acid chain: Thiazole synthase (260 aa).

Lysine 102 acts as the Schiff-base intermediate with DXP in catalysis. Residues glycine 163, 189–190 (AG), and 211–212 (NT) each bind 1-deoxy-D-xylulose 5-phosphate.

It belongs to the ThiG family. Homotetramer. Forms heterodimers with either ThiH or ThiS.

The protein localises to the cytoplasm. It carries out the reaction [ThiS sulfur-carrier protein]-C-terminal-Gly-aminoethanethioate + 2-iminoacetate + 1-deoxy-D-xylulose 5-phosphate = [ThiS sulfur-carrier protein]-C-terminal Gly-Gly + 2-[(2R,5Z)-2-carboxy-4-methylthiazol-5(2H)-ylidene]ethyl phosphate + 2 H2O + H(+). It functions in the pathway cofactor biosynthesis; thiamine diphosphate biosynthesis. Its function is as follows. Catalyzes the rearrangement of 1-deoxy-D-xylulose 5-phosphate (DXP) to produce the thiazole phosphate moiety of thiamine. Sulfur is provided by the thiocarboxylate moiety of the carrier protein ThiS. In vitro, sulfur can be provided by H(2)S. This is Thiazole synthase from Geobacter sulfurreducens (strain ATCC 51573 / DSM 12127 / PCA).